Consider the following 415-residue polypeptide: Serine hydroxymethyltransferase 3 (415 aa).

(6S)-5,6,7,8-tetrahydrofolate contacts are provided by residues Leu122 and 126–128 (GHL). Residue Lys230 is modified to N6-(pyridoxal phosphate)lysine.

Belongs to the SHMT family. As to quaternary structure, homodimer. The cofactor is pyridoxal 5'-phosphate.

The protein localises to the cytoplasm. It catalyses the reaction (6R)-5,10-methylene-5,6,7,8-tetrahydrofolate + glycine + H2O = (6S)-5,6,7,8-tetrahydrofolate + L-serine. It participates in one-carbon metabolism; tetrahydrofolate interconversion. It functions in the pathway amino-acid biosynthesis; glycine biosynthesis; glycine from L-serine: step 1/1. Its function is as follows. Catalyzes the reversible interconversion of serine and glycine with tetrahydrofolate (THF) serving as the one-carbon carrier. This reaction serves as the major source of one-carbon groups required for the biosynthesis of purines, thymidylate, methionine, and other important biomolecules. Also exhibits THF-independent aldolase activity toward beta-hydroxyamino acids, producing glycine and aldehydes, via a retro-aldol mechanism. This Burkholderia lata (strain ATCC 17760 / DSM 23089 / LMG 22485 / NCIMB 9086 / R18194 / 383) protein is Serine hydroxymethyltransferase 3.